The chain runs to 170 residues: Thialysine N-epsilon-acetyltransferase (170 aa).

The region spanning 4 to 166 (TRIREARESD…FRFEGEAMRE (163 aa)) is the N-acetyltransferase domain. 27 to 28 (FE) is a binding site for substrate. Lysine 29 carries the N6-acetyllysine modification. A substrate-binding site is contributed by glutamate 92. Acetyl-CoA-binding positions include 94-96 (IYV), 102-107 (GQGIGT), 133-135 (NKK), and tyrosine 140. Tyrosine 140 acts as the Proton donor in catalysis. Substrate is bound at residue glutamate 152.

This sequence belongs to the acetyltransferase family. Homodimer.

Its subcellular location is the cytoplasm. It carries out the reaction S-(2-aminoethyl)-L-cysteine + acetyl-CoA = S-(2-acetamidoethyl)-L-cysteine + CoA + H(+). The enzyme catalyses an alkane-alpha,omega-diamine + acetyl-CoA = an N-acetylalkane-alpha,omega-diamine + CoA + H(+). Catalyzes the N-acetylation of the amino acid thialysine (S-(2-aminoethyl)-L-cysteine), a L-lysine analog with the 4-methylene group substituted with a sulfur. May also catalyze acetylation of polyamines, such as norspermidine, spermidine or spermine. However, ability to acetylate polyamines is weak, suggesting that it does not act as a diamine acetyltransferase in vivo. The protein is Thialysine N-epsilon-acetyltransferase of Mus musculus (Mouse).